Here is a 104-residue protein sequence, read N- to C-terminus: Ubiquitin-related modifier 1 homolog (104 aa).

Residue Gly-104 is modified to 1-thioglycine. Gly-104 is covalently cross-linked (Glycyl lysine isopeptide (Gly-Lys) (interchain with K-? in acceptor proteins)).

It belongs to the URM1 family. Interacts with cer. C-terminal thiocarboxylation occurs in 2 steps, it is first acyl-adenylated (-COAMP) via the hesA/moeB/thiF part of the MOCS3 homolog, then thiocarboxylated (-COSH) via the rhodanese domain of the MOCS3 homolog.

The protein resides in the cytoplasm. The protein operates within tRNA modification; 5-methoxycarbonylmethyl-2-thiouridine-tRNA biosynthesis. In terms of biological role, acts as a sulfur carrier required for 2-thiolation of mcm(5)S(2)U at tRNA wobble positions of cytosolic tRNA(Lys), tRNA(Glu) and tRNA(Gln). Serves as sulfur donor in tRNA 2-thiolation reaction by being thiocarboxylated (-COSH) at its C-terminus by MOCS3. The sulfur is then transferred to tRNA to form 2-thiolation of mcm(5)S(2)U. Also acts as a ubiquitin-like protein (UBL) that is covalently conjugated via an isopeptide bond to lysine residues of target proteins such as Prx2/Jafrac1, Ciao1, Eip71CD and GILT1. The thiocarboxylated form serves as substrate for conjugation and oxidative stress specifically induces the formation of UBL-protein conjugates. The polypeptide is Ubiquitin-related modifier 1 homolog (Drosophila grimshawi (Hawaiian fruit fly)).